We begin with the raw amino-acid sequence, 289 residues long: ATP synthase gamma chain (289 aa).

Belongs to the ATPase gamma chain family. F-type ATPases have 2 components, CF(1) - the catalytic core - and CF(0) - the membrane proton channel. CF(1) has five subunits: alpha(3), beta(3), gamma(1), delta(1), epsilon(1). CF(0) has three main subunits: a, b and c.

It localises to the cell inner membrane. Produces ATP from ADP in the presence of a proton gradient across the membrane. The gamma chain is believed to be important in regulating ATPase activity and the flow of protons through the CF(0) complex. In Nitrosococcus oceani (strain ATCC 19707 / BCRC 17464 / JCM 30415 / NCIMB 11848 / C-107), this protein is ATP synthase gamma chain.